The following is a 974-amino-acid chain: Toxin subunit YenC1 (974 aa).

RHS repeat units lie at residues 165-179 (AGQC…GLNQ), 290-304 (GVLT…TQRL), 322-336 (FQDL…GNVL), 354-368 (VPEN…YQLV), 398-412 (NYIR…GNLM), 490-504 (SDSE…SQRV), 570-584 (NDEL…IGSS), 596-610 (SQEE…AVWM), and 630-644 (DATG…YYQP). Positions 600–680 (YYPYGGTAVW…PIVLHDPDGL (81 aa)) are RHS-repeat associated core domain. The segment at 699-940 (ISSLKGTGPF…GEVSASTLLE (242 aa)) is cytotoxic necrotising factor domain.

Belongs to the RHS family. As to quaternary structure, semipurified toxin complex consists of at least YenA1-YenA2-YenB-YenC1-YenC2-Chi1-Chi2. The Yen-TC:K9 subcomplex is about 26 nm tall and 22 nm in diameter with 5-fold symmetry and 5 copies of YenA1, YenA2, Chi1 and Chi2; the chitinase subunits may be solvent accessible on the exterior the complex. The Yen-TC:K9 subcomplex has no insecticidal activity. The native complex with additional YenB, YenC1 and YenC2 subunits is 16 nm taller and is insecticidal; the toxicity-conferring subunits are present at about 1 copy each.

The protein localises to the secreted. Toxin complex is secreted when grown at 25 degrees Celsius or less; at higher temperatures the proteins are present intracellularly but not secreted. Part of an orally active toxin complex (TC) with strong insecticidal effects on larvae of the Coleoptera Costelytra zealandica, Acrossidius tasmania and Adoryphorus couloni and some Lepidoptera larvae. The TC has an endochitinase activity. This is Toxin subunit YenC1 from Yersinia entomophaga.